We begin with the raw amino-acid sequence, 335 residues long: Beta-ketoacyl-[acyl-carrier-protein] synthase III (335 aa).

Catalysis depends on residues cysteine 117 and histidine 258. Residues 259 to 263 (QANQR) form an ACP-binding region. Residue asparagine 288 is part of the active site.

Belongs to the thiolase-like superfamily. FabH family. As to quaternary structure, homodimer.

The protein resides in the cytoplasm. The catalysed reaction is malonyl-[ACP] + acetyl-CoA + H(+) = 3-oxobutanoyl-[ACP] + CO2 + CoA. It participates in lipid metabolism; fatty acid biosynthesis. Catalyzes the condensation reaction of fatty acid synthesis by the addition to an acyl acceptor of two carbons from malonyl-ACP. Catalyzes the first condensation reaction which initiates fatty acid synthesis and may therefore play a role in governing the total rate of fatty acid production. Possesses both acetoacetyl-ACP synthase and acetyl transacylase activities. Its substrate specificity determines the biosynthesis of branched-chain and/or straight-chain of fatty acids. This chain is Beta-ketoacyl-[acyl-carrier-protein] synthase III, found in Synechococcus elongatus (strain ATCC 33912 / PCC 7942 / FACHB-805) (Anacystis nidulans R2).